The primary structure comprises 522 residues: Glutamate--cysteine ligase (522 aa).

Belongs to the glutamate--cysteine ligase type 1 family. Type 1 subfamily.

It catalyses the reaction L-cysteine + L-glutamate + ATP = gamma-L-glutamyl-L-cysteine + ADP + phosphate + H(+). It functions in the pathway sulfur metabolism; glutathione biosynthesis; glutathione from L-cysteine and L-glutamate: step 1/2. This Shewanella pealeana (strain ATCC 700345 / ANG-SQ1) protein is Glutamate--cysteine ligase.